A 368-amino-acid polypeptide reads, in one-letter code: Polymerase delta-interacting protein 2 (368 aa).

The transit peptide at 1-51 (MAACTARRALAVGSRWWSRSLTGARWPRPLCAAAGAGAFSPASTTTTRRHL) directs the protein to the mitochondrion. An ApaG domain is found at 235–360 (RETTENIRVT…FSLESNKDEK (126 aa)). Residue threonine 292 is modified to Phosphothreonine.

Interacts with PCNA and POLD2. Interacts with SSBP1. Interacts with PRIMPOL; leading to enhance DNA polymerase activity of PRIMPOL. Interacts with POLH. Interacts with POLD1; leading to stimulate DNA polymerase activity of POLD1.

The protein resides in the mitochondrion matrix. It localises to the nucleus. Involved in DNA damage tolerance by regulating translesion synthesis (TLS) of templates carrying DNA damage lesions such as 8oxoG and abasic sites. May act by stimulating activity of DNA polymerases involved in TLS, such as PRIMPOL and polymerase delta (POLD1). The sequence is that of Polymerase delta-interacting protein 2 from Homo sapiens (Human).